The sequence spans 240 residues: Glutathione S-transferase theta-1 (240 aa).

Residues 2–82 form the GST N-terminal domain; that stretch reads VLELYLDLLS…YLAHKYKVPD (81 aa). Glutathione contacts are provided by residues histidine 40, 53 to 54, and 66 to 67; these read KV and ES. The region spanning 88–223 is the GST C-terminal domain; it reads DLQARARVDE…ILKVRDCPPA (136 aa).

It belongs to the GST superfamily. Theta family. As to quaternary structure, homodimer. As to expression, in liver, highest expression found in central vein limiting plate hepatocytes. In lung, expressed mainly in club cells of the bronchiolar epithelium and, at low levels, in type II alveolar cells.

The protein resides in the cytoplasm. It catalyses the reaction RX + glutathione = an S-substituted glutathione + a halide anion + H(+). In terms of biological role, conjugation of reduced glutathione to a wide number of exogenous and endogenous hydrophobic electrophiles. Also binds steroids, bilirubin, carcinogens and numerous organic anions. Has dichloromethane dehalogenase activity. In Rattus norvegicus (Rat), this protein is Glutathione S-transferase theta-1 (Gstt1).